We begin with the raw amino-acid sequence, 1101 residues long: Protein diaphanous homolog 2 (1101 aa).

Methionine 1 carries the post-translational modification N-acetylmethionine. Residues 1–44 (MEQPGAAASGAGGGSEEPGGGRSNKRSAGNRAANEEETKNKPKL) form a disordered region. Over residues 10-22 (GAGGGSEEPGGGR) the composition is skewed to gly residues. The GBD/FH3 domain maps to 98–464 (SLNLSEKEVL…QIVLHCSGMD (367 aa)). Coiled coils occupy residues 366–418 (KEKE…MLKD) and 487–547 (KAKV…SSSG). Residues 536–546 (RTQAQVLSSSS) show a composition bias toward polar residues. 3 disordered regions span residues 536–594 (RTQA…PPPP), 1010–1048 (NKRR…DINK), and 1070–1101 (RDRR…ISSK). Pro residues predominate over residues 549–594 (PGPPAAPPLPGVGPPPPPPAPPLPGGAPLPPPPPPLPGMMGIPPPP). Positions 549–623 (PGPPAAPPLP…PPPGISLNLP (75 aa)) constitute an FH1 domain. Positions 628–1028 (QKKMYKPEVS…TRRAKLAKEK (401 aa)) constitute an FH2 domain. A coiled-coil region spans residues 903 to 1053 (SASKVSAQIL…IDINKEGDET (151 aa)). 2 stretches are compositionally biased toward basic and acidic residues: residues 1010 to 1035 (NKRR…EKLE) and 1078 to 1090 (RNPD…LERS). The 31-residue stretch at 1051–1081 (DETGVMDNLLEALQSGAAFRDRRKRIPRNPD) folds into the DAD domain.

Belongs to the formin homology family. Diaphanous subfamily. As to quaternary structure, isoform 3 interacts with RHOD in the GTP-bound form. In terms of tissue distribution, expressed in testis, ovary, small intestine, prostate, lung, liver, kidney and leukocytes.

Its subcellular location is the cytoplasm. The protein localises to the cytosol. It localises to the early endosome. Its function is as follows. Could be involved in oogenesis. Involved in the regulation of endosome dynamics. Implicated in a novel signal transduction pathway, in which isoform 3 and CSK are sequentially activated by RHOD to regulate the motility of early endosomes through interactions with the actin cytoskeleton. This is Protein diaphanous homolog 2 (DIAPH2) from Homo sapiens (Human).